A 222-amino-acid polypeptide reads, in one-letter code: ATP synthase F(0) complex subunit a (222 aa).

A run of 6 helical transmembrane segments spans residues 7–27 (AFFD…AILL), 64–84 (WSLM…LGLL), 93–113 (QLTV…ILGF), 132–152 (FLIP…PVTL), 160–180 (ITAG…LLSI), and 185–205 (ITVT…VALI).

It belongs to the ATPase A chain family. In terms of assembly, component of the ATP synthase complex composed at least of ATP5F1A/subunit alpha, ATP5F1B/subunit beta, ATP5MC1/subunit c (homooctomer), MT-ATP6/subunit a, MT-ATP8/subunit 8, ATP5ME/subunit e, ATP5MF/subunit f, ATP5MG/subunit g, ATP5MK/subunit k, ATP5MJ/subunit j, ATP5F1C/subunit gamma, ATP5F1D/subunit delta, ATP5F1E/subunit epsilon, ATP5PF/subunit F6, ATP5PB/subunit b, ATP5PD/subunit d, ATP5PO/subunit OSCP. ATP synthase complex consists of a soluble F(1) head domain (subunits alpha(3) and beta(3)) - the catalytic core - and a membrane F(0) domain - the membrane proton channel (subunits c, a, 8, e, f, g, k and j). These two domains are linked by a central stalk (subunits gamma, delta, and epsilon) rotating inside the F1 region and a stationary peripheral stalk (subunits F6, b, d, and OSCP). Interacts with DNAJC30; interaction is direct.

The protein localises to the mitochondrion inner membrane. It catalyses the reaction H(+)(in) = H(+)(out). Its function is as follows. Subunit a, of the mitochondrial membrane ATP synthase complex (F(1)F(0) ATP synthase or Complex V) that produces ATP from ADP in the presence of a proton gradient across the membrane which is generated by electron transport complexes of the respiratory chain. ATP synthase complex consist of a soluble F(1) head domain - the catalytic core - and a membrane F(1) domain - the membrane proton channel. These two domains are linked by a central stalk rotating inside the F(1) region and a stationary peripheral stalk. During catalysis, ATP synthesis in the catalytic domain of F(1) is coupled via a rotary mechanism of the central stalk subunits to proton translocation. With the subunit c (ATP5MC1), forms the proton-conducting channel in the F(0) domain, that contains two crucial half-channels (inlet and outlet) that facilitate proton movement from the mitochondrial intermembrane space (IMS) into the matrix. Protons are taken up via the inlet half-channel and released through the outlet half-channel, following a Grotthuss mechanism. The protein is ATP synthase F(0) complex subunit a of Mammuthus primigenius (Siberian woolly mammoth).